Here is a 122-residue protein sequence, read N- to C-terminus: Small ribosomal subunit protein uS12 (122 aa).

Asp89 carries the 3-methylthioaspartic acid modification.

The protein belongs to the universal ribosomal protein uS12 family. As to quaternary structure, part of the 30S ribosomal subunit. Contacts proteins S8 and S17. May interact with IF1 in the 30S initiation complex.

Functionally, with S4 and S5 plays an important role in translational accuracy. In terms of biological role, interacts with and stabilizes bases of the 16S rRNA that are involved in tRNA selection in the A site and with the mRNA backbone. Located at the interface of the 30S and 50S subunits, it traverses the body of the 30S subunit contacting proteins on the other side and probably holding the rRNA structure together. The combined cluster of proteins S8, S12 and S17 appears to hold together the shoulder and platform of the 30S subunit. In Neorickettsia sennetsu (strain ATCC VR-367 / Miyayama) (Ehrlichia sennetsu), this protein is Small ribosomal subunit protein uS12.